A 447-amino-acid polypeptide reads, in one-letter code: Methylenetetrahydrofolate--tRNA-(uracil-5-)-methyltransferase TrmFO (447 aa).

Residue 13–18 coordinates FAD; sequence GAGLAG.

It belongs to the MnmG family. TrmFO subfamily. The cofactor is FAD.

The protein resides in the cytoplasm. The enzyme catalyses uridine(54) in tRNA + (6R)-5,10-methylene-5,6,7,8-tetrahydrofolate + NADH + H(+) = 5-methyluridine(54) in tRNA + (6S)-5,6,7,8-tetrahydrofolate + NAD(+). The catalysed reaction is uridine(54) in tRNA + (6R)-5,10-methylene-5,6,7,8-tetrahydrofolate + NADPH + H(+) = 5-methyluridine(54) in tRNA + (6S)-5,6,7,8-tetrahydrofolate + NADP(+). Catalyzes the folate-dependent formation of 5-methyl-uridine at position 54 (M-5-U54) in all tRNAs. The protein is Methylenetetrahydrofolate--tRNA-(uracil-5-)-methyltransferase TrmFO of Streptococcus thermophilus (strain ATCC BAA-491 / LMD-9).